We begin with the raw amino-acid sequence, 468 residues long: UDP-N-acetylmuramate--L-alanine ligase (468 aa).

Residue 118-124 coordinates ATP; that stretch reads GTHGKTT.

This sequence belongs to the MurCDEF family.

It is found in the cytoplasm. It catalyses the reaction UDP-N-acetyl-alpha-D-muramate + L-alanine + ATP = UDP-N-acetyl-alpha-D-muramoyl-L-alanine + ADP + phosphate + H(+). It functions in the pathway cell wall biogenesis; peptidoglycan biosynthesis. Its function is as follows. Cell wall formation. The protein is UDP-N-acetylmuramate--L-alanine ligase of Roseobacter denitrificans (strain ATCC 33942 / OCh 114) (Erythrobacter sp. (strain OCh 114)).